The sequence spans 194 residues: Probable GTP-binding protein EngB (194 aa).

Residues 22–194 (GKPEIALVGR…EVWHWIEQHI (173 aa)) enclose the EngB-type G domain. Residues 30 to 37 (GRSNVGKS), 57 to 61 (GKTQT), 75 to 78 (DVPG), 142 to 145 (TKSD), and 175 to 177 (FSS) contribute to the GTP site. Residues Ser-37 and Thr-59 each contribute to the Mg(2+) site.

The protein belongs to the TRAFAC class TrmE-Era-EngA-EngB-Septin-like GTPase superfamily. EngB GTPase family. Mg(2+) serves as cofactor.

In terms of biological role, necessary for normal cell division and for the maintenance of normal septation. This is Probable GTP-binding protein EngB from Leuconostoc mesenteroides subsp. mesenteroides (strain ATCC 8293 / DSM 20343 / BCRC 11652 / CCM 1803 / JCM 6124 / NCDO 523 / NBRC 100496 / NCIMB 8023 / NCTC 12954 / NRRL B-1118 / 37Y).